Consider the following 238-residue polypeptide: End-binding protein 1 (238 aa).

Residues 15-117 (FVGRVSLLKW…FFQWFKWFFD (103 aa)) enclose the Calponin-homology (CH) domain. An interaction with aurora kinase region spans residues 101–238 (KYMDNFEFFQ…EDILYAEYHQ (138 aa)). Polar residues predominate over residues 124–165 (KSGATESGSANAVTKTSKPGNRSGSTAASMQNPKASSTSGPS). The segment at 124 to 169 (KSGATESGSANAVTKTSKPGNRSGSTAASMQNPKASSTSGPSIDSK) is disordered. Serine 148 is modified (phosphoserine). The 83-residue stretch at 156 to 238 (PKASSTSGPS…EDILYAEYHQ (83 aa)) folds into the EB1 C-terminal domain.

The protein belongs to the MAPRE family. Homodimer; disulfide-linked and via interaction of the C-terminal EB1-specific domains. Interacts with BOP1 (via C-terminal WD repeats). Interacts with giardin subunit gamma, neurogenic locus notch homolog protein, GL50803_8358 and GL50803_11327. Interacts (via C-terminal residues 101-238) with aurora kinase. Interacts with tubulin gamma chain. Phosphorylated in vitro by aurora kinase. Phosphorylation is important for cell division.

The protein resides in the nucleus membrane. It is found in the cytoplasm. Its subcellular location is the cytoskeleton. The protein localises to the spindle. It localises to the nucleus envelope. The protein resides in the flagellum axoneme. It is found in the cell projection. Its subcellular location is the cilium. The protein localises to the flagellum. Functionally, involved in cell division. Involved in mitosis. Regulates dynamics of microtubules (MTs) during mitosis. Required for cytokinesis. Binds polymerized MTs in vitro. Is able to rescue a mitotic division defect, the proper positioning of the nucleus, of the S.cerevisiae BIM1 knockout mutant in a complementation assay. May play a role in spindle positioning and MT distribution. May be involved in MT nucleation for the formation of median bodies and in the biogenesis of flagella. Based on its localization to both the flagellar exit point and the distal flagellar tips, it may mediate the transition from anterograde to retrograde intraflagellar transport (IFT). This is End-binding protein 1 from Giardia intestinalis (strain ATCC 50803 / WB clone C6) (Giardia lamblia).